The primary structure comprises 74 residues: Exodeoxyribonuclease 7 small subunit (74 aa).

Belongs to the XseB family. Heterooligomer composed of large and small subunits.

The protein localises to the cytoplasm. It catalyses the reaction Exonucleolytic cleavage in either 5'- to 3'- or 3'- to 5'-direction to yield nucleoside 5'-phosphates.. Functionally, bidirectionally degrades single-stranded DNA into large acid-insoluble oligonucleotides, which are then degraded further into small acid-soluble oligonucleotides. This is Exodeoxyribonuclease 7 small subunit from Glaesserella parasuis serovar 5 (strain SH0165) (Haemophilus parasuis).